The sequence spans 251 residues: Uridylate kinase (251 aa).

Residue K26 to G29 coordinates ATP. G67 is a UMP binding site. G68 and R72 together coordinate ATP. UMP contacts are provided by residues D87 and M148–T155. F181 and D184 together coordinate ATP.

Belongs to the UMP kinase family. In terms of assembly, homohexamer.

The protein localises to the cytoplasm. It catalyses the reaction UMP + ATP = UDP + ADP. It participates in pyrimidine metabolism; CTP biosynthesis via de novo pathway; UDP from UMP (UMPK route): step 1/1. Its activity is regulated as follows. Inhibited by UTP. Catalyzes the reversible phosphorylation of UMP to UDP. This Mycolicibacterium vanbaalenii (strain DSM 7251 / JCM 13017 / BCRC 16820 / KCTC 9966 / NRRL B-24157 / PYR-1) (Mycobacterium vanbaalenii) protein is Uridylate kinase.